Reading from the N-terminus, the 428-residue chain is Enolase (428 aa).

Residue Gln-163 participates in (2R)-2-phosphoglycerate binding. The active-site Proton donor is the Glu-205. The Mg(2+) site is built by Asp-242, Glu-286, and Asp-313. (2R)-2-phosphoglycerate-binding residues include Lys-338, Arg-367, Ser-368, and Lys-389. The Proton acceptor role is filled by Lys-338.

Belongs to the enolase family. Requires Mg(2+) as cofactor.

It is found in the cytoplasm. Its subcellular location is the secreted. The protein localises to the cell surface. It carries out the reaction (2R)-2-phosphoglycerate = phosphoenolpyruvate + H2O. Its pathway is carbohydrate degradation; glycolysis; pyruvate from D-glyceraldehyde 3-phosphate: step 4/5. In terms of biological role, catalyzes the reversible conversion of 2-phosphoglycerate (2-PG) into phosphoenolpyruvate (PEP). It is essential for the degradation of carbohydrates via glycolysis. The polypeptide is Enolase (Syntrophus aciditrophicus (strain SB)).